The primary structure comprises 108 residues: SPbeta prophage-derived uncharacterized HTH-type transcriptional regulator YonR (108 aa).

One can recognise an HTH cro/C1-type domain in the interval 6 to 60 (LKKCRTSKGYSQQRMADFLGITRQGYGKYEIGKAEPDLKTLTKLSNILGVSTDFL). The H-T-H motif DNA-binding region spans 17-36 (QQRMADFLGITRQGYGKYEI).

In Bacillus subtilis (strain 168), this protein is SPbeta prophage-derived uncharacterized HTH-type transcriptional regulator YonR (yonR).